Consider the following 252-residue polypeptide: MGKNKLEKFADMASYPHVFEYPYSAVDNVPFDMKGKWHKEFFKNDNPIVLELGCGRGEYTVGLGRMFPDKNFIAVDIKGARMWTGATESLQAGMKNVAFLRTNIEIIDRFFAEGEVSEIWLTFSDPQMKKATKRLTSTYFMERYRKFLVSNGIIHLKTDSNFMFTYTKYMIEENGLPVEFITEDLYHSDLVDDILGIKTYYEQQWLDRGLSIKYIKFLLPQEGELREPDIEIELDSYRSYNRSKRSGLQTSK.

S-adenosyl-L-methionine-binding residues include E51, D76, N103, and D125. D125 is an active-site residue. Residues K129, D159, and 199–202 (TYYE) contribute to the substrate site.

The protein belongs to the class I-like SAM-binding methyltransferase superfamily. TrmB family.

The enzyme catalyses guanosine(46) in tRNA + S-adenosyl-L-methionine = N(7)-methylguanosine(46) in tRNA + S-adenosyl-L-homocysteine. The protein operates within tRNA modification; N(7)-methylguanine-tRNA biosynthesis. Functionally, catalyzes the formation of N(7)-methylguanine at position 46 (m7G46) in tRNA. This chain is tRNA (guanine-N(7)-)-methyltransferase, found in Bacteroides fragilis (strain YCH46).